Consider the following 97-residue polypeptide: Co-chaperonin GroES (97 aa).

Belongs to the GroES chaperonin family. In terms of assembly, heptamer of 7 subunits arranged in a ring. Interacts with the chaperonin GroEL.

The protein resides in the cytoplasm. Together with the chaperonin GroEL, plays an essential role in assisting protein folding. The GroEL-GroES system forms a nano-cage that allows encapsulation of the non-native substrate proteins and provides a physical environment optimized to promote and accelerate protein folding. GroES binds to the apical surface of the GroEL ring, thereby capping the opening of the GroEL channel. In Yersinia enterocolitica serotype O:8 / biotype 1B (strain NCTC 13174 / 8081), this protein is Co-chaperonin GroES.